Reading from the N-terminus, the 495-residue chain is Trigger factor (495 aa).

The region spanning 162–243 (DDFVSIDLSA…VKSLKERELP (82 aa)) is the PPIase FKBP-type domain. The segment covering 425-437 (DTDGNEIDPKEYF) has biased composition (basic and acidic residues). Positions 425-495 (DTDGNEIDPK…TDDDSENAEK (71 aa)) are disordered. Residues 450–461 (SADAEASENSEA) are compositionally biased toward low complexity. Acidic residues predominate over residues 486–495 (TDDDSENAEK).

Belongs to the FKBP-type PPIase family. Tig subfamily.

It is found in the cytoplasm. The enzyme catalyses [protein]-peptidylproline (omega=180) = [protein]-peptidylproline (omega=0). Involved in protein export. Acts as a chaperone by maintaining the newly synthesized protein in an open conformation. Functions as a peptidyl-prolyl cis-trans isomerase. This Corynebacterium kroppenstedtii (strain DSM 44385 / JCM 11950 / CIP 105744 / CCUG 35717) protein is Trigger factor.